Consider the following 460-residue polypeptide: Signal recognition particle 54 kDa protein (460 aa).

GTP is bound by residues 104–111 (GLQGSGKT), 184–188 (DTAGR), and 242–245 (TKLD).

Belongs to the GTP-binding SRP family. SRP54 subfamily. In terms of assembly, part of the signal recognition particle protein translocation system, which is composed of SRP and FtsY. Archaeal SRP consists of a 7S RNA molecule of 300 nucleotides and two protein subunits: SRP54 and SRP19.

Its subcellular location is the cytoplasm. The catalysed reaction is GTP + H2O = GDP + phosphate + H(+). Involved in targeting and insertion of nascent membrane proteins into the cytoplasmic membrane. Binds to the hydrophobic signal sequence of the ribosome-nascent chain (RNC) as it emerges from the ribosomes. The SRP-RNC complex is then targeted to the cytoplasmic membrane where it interacts with the SRP receptor FtsY. This chain is Signal recognition particle 54 kDa protein, found in Halobacterium salinarum (strain ATCC 29341 / DSM 671 / R1).